The primary structure comprises 355 residues: UDP-N-acetylglucosamine--N-acetylmuramyl-(pentapeptide) pyrophosphoryl-undecaprenol N-acetylglucosamine transferase (355 aa).

UDP-N-acetyl-alpha-D-glucosamine-binding positions include 11 to 13 (TGG), asparagine 120, arginine 161, serine 188, and glutamine 280.

The protein belongs to the glycosyltransferase 28 family. MurG subfamily.

The protein resides in the cell inner membrane. The catalysed reaction is di-trans,octa-cis-undecaprenyl diphospho-N-acetyl-alpha-D-muramoyl-L-alanyl-D-glutamyl-meso-2,6-diaminopimeloyl-D-alanyl-D-alanine + UDP-N-acetyl-alpha-D-glucosamine = di-trans,octa-cis-undecaprenyl diphospho-[N-acetyl-alpha-D-glucosaminyl-(1-&gt;4)]-N-acetyl-alpha-D-muramoyl-L-alanyl-D-glutamyl-meso-2,6-diaminopimeloyl-D-alanyl-D-alanine + UDP + H(+). The protein operates within cell wall biogenesis; peptidoglycan biosynthesis. Cell wall formation. Catalyzes the transfer of a GlcNAc subunit on undecaprenyl-pyrophosphoryl-MurNAc-pentapeptide (lipid intermediate I) to form undecaprenyl-pyrophosphoryl-MurNAc-(pentapeptide)GlcNAc (lipid intermediate II). In Prochlorococcus marinus (strain MIT 9211), this protein is UDP-N-acetylglucosamine--N-acetylmuramyl-(pentapeptide) pyrophosphoryl-undecaprenol N-acetylglucosamine transferase.